The sequence spans 357 residues: Red-sensitive opsin (357 aa).

Topologically, residues 1–49 are extracellular; that stretch reads MGDQWGDAVFAARRRGDDTTREAAFTYTNSNNTKDPFEGPNYHIAPRWV. A glycan (N-linked (GlcNAc...) asparagine) is linked at N31. The helical transmembrane segment at 50–74 threads the bilayer; the sequence is YNLATCWMFFVVVASTVTNGLVLVA. The Cytoplasmic segment spans residues 75–86; it reads SAKFKKLRHPLN. The chain crosses the membrane as a helical span at residues 87–112; it reads WILVNLAIADLLETLLASTISVCNQF. Topologically, residues 113 to 126 are extracellular; that stretch reads FGYFILGHPMCVFE. A disulfide bond links C123 and C200. A helical transmembrane segment spans residues 127–146; sequence GFTVATCGIAGLWSLTVISW. Residues 147 to 165 are Cytoplasmic-facing; that stretch reads ERWVVVCKPFGNVKFDGKM. The helical transmembrane segment at 166 to 189 threads the bilayer; sequence ATAGIVFTWVWSAVWCAPPIFGWS. Over 190–215 the chain is Extracellular; that stretch reads RYWPHGLKTSCGPDVFSGSEDPGVQS. A helical membrane pass occupies residues 216–243; that stretch reads YMIVLMITCCFIPLGIIILCYIAVWWAI. The Cytoplasmic portion of the chain corresponds to 244-265; the sequence is RTVAQQQKDSESTQKAEKEVSR. Residues 266-289 traverse the membrane as a helical segment; that stretch reads MVVVMIMAYCFCWGPYTFFACFAA. The Extracellular segment spans residues 290 to 297; sequence ANPGYAFH. A helical membrane pass occupies residues 298–322; that stretch reads PLAAAMPAYFAKSATIYNPVIYVFM. Residue K309 is modified to N6-(retinylidene)lysine. Over 323–357 the chain is Cytoplasmic; that stretch reads NRQFRVCIMQLFGKKVDDGSEVSTSKTEVSSVAPA.

Belongs to the G-protein coupled receptor 1 family. Opsin subfamily. In terms of processing, phosphorylated on some or all of the serine and threonine residues present in the C-terminal region. As to expression, the color pigments are found in the cone photoreceptor cells.

It localises to the membrane. Functionally, visual pigments are the light-absorbing molecules that mediate vision. They consist of an apoprotein, opsin, covalently linked to cis-retinal. The sequence is that of Red-sensitive opsin (R007) from Psalidodon fasciatus (Banded astyanax).